A 284-amino-acid polypeptide reads, in one-letter code: Bifunctional protein FolD (284 aa).

Residues 165-167 (GRS), Ser190, and Val231 contribute to the NADP(+) site.

The protein belongs to the tetrahydrofolate dehydrogenase/cyclohydrolase family. Homodimer.

The catalysed reaction is (6R)-5,10-methylene-5,6,7,8-tetrahydrofolate + NADP(+) = (6R)-5,10-methenyltetrahydrofolate + NADPH. It catalyses the reaction (6R)-5,10-methenyltetrahydrofolate + H2O = (6R)-10-formyltetrahydrofolate + H(+). Its pathway is one-carbon metabolism; tetrahydrofolate interconversion. In terms of biological role, catalyzes the oxidation of 5,10-methylenetetrahydrofolate to 5,10-methenyltetrahydrofolate and then the hydrolysis of 5,10-methenyltetrahydrofolate to 10-formyltetrahydrofolate. This is Bifunctional protein FolD from Geobacillus kaustophilus (strain HTA426).